The primary structure comprises 209 residues: Large ribosomal subunit protein uL3 (209 aa).

At glutamine 150 the chain carries N5-methylglutamine.

It belongs to the universal ribosomal protein uL3 family. Part of the 50S ribosomal subunit. Forms a cluster with proteins L14 and L19. Methylated by PrmB.

Functionally, one of the primary rRNA binding proteins, it binds directly near the 3'-end of the 23S rRNA, where it nucleates assembly of the 50S subunit. The chain is Large ribosomal subunit protein uL3 from Buchnera aphidicola subsp. Acyrthosiphon pisum (strain 5A).